Here is a 226-residue protein sequence, read N- to C-terminus: Molybdenum transport system permease protein ModB (226 aa).

The 207-residue stretch at 11–217 folds into the ABC transmembrane type-1 domain; the sequence is IRLTLELASL…SFLVLFALYS (207 aa). 5 helical membrane passes run 17-37, 47-67, 88-108, 150-170, and 197-217; these read LASLTTVLLLVVGTPIAWWLA, IGAVVALPLVLPPTVLGFYLL, LPFTFAGLVVASVFYSLPFVV, ITAAILGFAHTVGEFGVVLMI, and AHWLAGGMVLFSFLVLFALYS.

Belongs to the binding-protein-dependent transport system permease family. CysTW subfamily.

Its subcellular location is the cell inner membrane. Part of the binding-protein-dependent transport system for molybdenum; probably responsible for the translocation of the substrate across the membrane. In Azotobacter vinelandii, this protein is Molybdenum transport system permease protein ModB (modB).